Reading from the N-terminus, the 571-residue chain is MARLRGAGAAGRCRPGRFGSSARRHGLADDGEPDRVLPARRRCSARRRHLVFGVQHPARRAADLRVRQRGDQGGHLRATVRRSRSRQRCAHRTHRLRRWRAPGTLSLTDLYAAASGDFFDFESTWRAVQPEDIVTLIYTSGTTGNPKGVEMTHANLLFEGYAIDEVLGIRFGDRVTSFLPSAHIADRMTGLYLQEMFGTQVTAVADARTIAAALPDVRPTVWGAVPRVWEKLKAGIEFTVARETDEMKRQALAWAMSVAGKRANALLAGESMSDQLVAEWAKADELVLSKLRERLGFGELRWALSGAAPIPKETLAFFAGIGIPIAEIWGMSELSCVATASHPRDGRLGTVGKLLPGLQGKIAEDGEYLVRGPLVMKGYRKEPAKTAEAIDSDGWLHTGDVFDIDSDGYLRVVDRKKELIINAAGKNMSPANIENTILAACPMVGVMMAIGDGRTYNTALLVFDADSLGPYAAQRGLDASPAALAADPEVIARIAAGVAEGNAKLSRVEQIKRFRILPTLWEPGGDEITLTMKLKRRRIAAKYSAEIEELYASELRPQVYEPAAVPSTQPA.

The segment covering 1–19 (MARLRGAGAAGRCRPGRFG) has biased composition (low complexity). Disordered regions lie at residues 1-35 (MARL…EPDR) and 67-91 (RQRG…RCAH). Residues 78 to 91 (ATVRRSRSRQRCAH) show a composition bias toward basic residues. 2 helical membrane passes run 314–334 (TLAF…MSEL) and 431–451 (ANIE…MAIG).

This sequence belongs to the ATP-dependent AMP-binding enzyme family.

It localises to the cell membrane. The chain is Putative fatty-acid--CoA ligase fadD11 (fadD11) from Mycobacterium tuberculosis (strain CDC 1551 / Oshkosh).